A 348-amino-acid polypeptide reads, in one-letter code: D-alanine--D-alanine ligase (348 aa).

Residues lysine 132–valine 334 form the ATP-grasp domain. Residue leucine 162–glutamate 217 participates in ATP binding. Mg(2+) contacts are provided by aspartate 288, glutamate 301, and asparagine 303.

The protein belongs to the D-alanine--D-alanine ligase family. It depends on Mg(2+) as a cofactor. Mn(2+) is required as a cofactor.

The protein localises to the cytoplasm. It catalyses the reaction 2 D-alanine + ATP = D-alanyl-D-alanine + ADP + phosphate + H(+). It functions in the pathway cell wall biogenesis; peptidoglycan biosynthesis. Its function is as follows. Cell wall formation. This Streptococcus thermophilus (strain CNRZ 1066) protein is D-alanine--D-alanine ligase.